Consider the following 392-residue polypeptide: Nicotinate phosphoribosyltransferase (392 aa).

His-214 bears the Phosphohistidine; by autocatalysis mark.

It belongs to the NAPRTase family. Transiently phosphorylated on a His residue during the reaction cycle. Phosphorylation strongly increases the affinity for substrates and increases the rate of nicotinate D-ribonucleotide production. Dephosphorylation regenerates the low-affinity form of the enzyme, leading to product release.

It catalyses the reaction nicotinate + 5-phospho-alpha-D-ribose 1-diphosphate + ATP + H2O = nicotinate beta-D-ribonucleotide + ADP + phosphate + diphosphate. Its pathway is cofactor biosynthesis; NAD(+) biosynthesis; nicotinate D-ribonucleotide from nicotinate: step 1/1. In terms of biological role, catalyzes the synthesis of beta-nicotinate D-ribonucleotide from nicotinate and 5-phospho-D-ribose 1-phosphate at the expense of ATP. This is Nicotinate phosphoribosyltransferase from Xanthomonas axonopodis pv. citri (strain 306).